A 169-amino-acid chain; its full sequence is Adenine phosphoribosyltransferase (169 aa).

It belongs to the purine/pyrimidine phosphoribosyltransferase family. As to quaternary structure, homodimer.

It is found in the cytoplasm. It carries out the reaction AMP + diphosphate = 5-phospho-alpha-D-ribose 1-diphosphate + adenine. The protein operates within purine metabolism; AMP biosynthesis via salvage pathway; AMP from adenine: step 1/1. In terms of biological role, catalyzes a salvage reaction resulting in the formation of AMP, that is energically less costly than de novo synthesis. The chain is Adenine phosphoribosyltransferase from Mycoplasmopsis synoviae (strain 53) (Mycoplasma synoviae).